The following is a 301-amino-acid chain: UDP-3-O-acyl-N-acetylglucosamine deacetylase (301 aa).

H81, H237, and D241 together coordinate Zn(2+). The active-site Proton donor is H264.

Belongs to the LpxC family. Requires Zn(2+) as cofactor.

It catalyses the reaction a UDP-3-O-[(3R)-3-hydroxyacyl]-N-acetyl-alpha-D-glucosamine + H2O = a UDP-3-O-[(3R)-3-hydroxyacyl]-alpha-D-glucosamine + acetate. It functions in the pathway glycolipid biosynthesis; lipid IV(A) biosynthesis; lipid IV(A) from (3R)-3-hydroxytetradecanoyl-[acyl-carrier-protein] and UDP-N-acetyl-alpha-D-glucosamine: step 2/6. In terms of biological role, catalyzes the hydrolysis of UDP-3-O-myristoyl-N-acetylglucosamine to form UDP-3-O-myristoylglucosamine and acetate, the committed step in lipid A biosynthesis. The chain is UDP-3-O-acyl-N-acetylglucosamine deacetylase from Leptospira interrogans serogroup Icterohaemorrhagiae serovar copenhageni (strain Fiocruz L1-130).